Here is a 401-residue protein sequence, read N- to C-terminus: uncharacterized protein (401 aa).

[4Fe-4S] cluster is bound by residues cysteine 7, cysteine 13, cysteine 16, and cysteine 94. Glutamine 230, tyrosine 259, glutamate 280, and aspartate 328 together coordinate S-adenosyl-L-methionine. The active-site Nucleophile is cysteine 355.

The protein belongs to the class I-like SAM-binding methyltransferase superfamily. RNA M5U methyltransferase family.

This is an uncharacterized protein from Chlamydia caviae (strain ATCC VR-813 / DSM 19441 / 03DC25 / GPIC) (Chlamydophila caviae).